The primary structure comprises 393 residues: Phosphoglycerate kinase (393 aa).

Residues 21-23 (DIN), R36, 59-62 (HFGR), R114, and R147 contribute to the substrate site. ATP-binding positions include K197, E319, and 349–352 (GGDT).

The protein belongs to the phosphoglycerate kinase family. Monomer.

It is found in the cytoplasm. It catalyses the reaction (2R)-3-phosphoglycerate + ATP = (2R)-3-phospho-glyceroyl phosphate + ADP. It participates in carbohydrate degradation; glycolysis; pyruvate from D-glyceraldehyde 3-phosphate: step 2/5. This Dinoroseobacter shibae (strain DSM 16493 / NCIMB 14021 / DFL 12) protein is Phosphoglycerate kinase.